The following is a 299-amino-acid chain: Regucalcin (299 aa).

Glu18 contacts a divalent metal cation. The substrate site is built by Arg101, Asn103, and Glu121. Lys144 bears the N6-succinyllysine mark. Residues Asn154 and Asp204 each coordinate a divalent metal cation. Asp204 (proton donor/acceptor) is an active-site residue. Lys244 and Lys253 each carry N6-succinyllysine.

It belongs to the SMP-30/CGR1 family. Monomer. Zn(2+) serves as cofactor. Mn(2+) is required as a cofactor. It depends on Ca(2+) as a cofactor. The cofactor is Mg(2+).

The protein localises to the cytoplasm. It catalyses the reaction D-glucono-1,5-lactone + H2O = D-gluconate + H(+). Its function is as follows. Gluconolactonase with low activity towards other sugar lactones, including gulonolactone and galactonolactone. Can also hydrolyze diisopropyl phosphorofluoridate and phenylacetate (in vitro). Calcium-binding protein. Modulates Ca(2+) signaling, and Ca(2+)-dependent cellular processes and enzyme activities. The chain is Regucalcin (RGN) from Homo sapiens (Human).